The chain runs to 466 residues: Cysteine--tRNA ligase (466 aa).

Cysteine 28 contacts Zn(2+). The short motif at 30–40 (PTVYNYIHIGN) is the 'HIGH' region element. Residues cysteine 208, histidine 233, and glutamate 237 each coordinate Zn(2+). The 'KMSKS' region motif lies at 265 to 269 (KMSKS). Residue lysine 268 coordinates ATP.

It belongs to the class-I aminoacyl-tRNA synthetase family. Monomer. Zn(2+) is required as a cofactor.

It is found in the cytoplasm. It carries out the reaction tRNA(Cys) + L-cysteine + ATP = L-cysteinyl-tRNA(Cys) + AMP + diphosphate. In Staphylococcus carnosus (strain TM300), this protein is Cysteine--tRNA ligase.